The sequence spans 316 residues: Phosphoribosylaminoimidazole-succinocarboxamide synthase (316 aa).

It belongs to the SAICAR synthetase family.

It catalyses the reaction 5-amino-1-(5-phospho-D-ribosyl)imidazole-4-carboxylate + L-aspartate + ATP = (2S)-2-[5-amino-1-(5-phospho-beta-D-ribosyl)imidazole-4-carboxamido]succinate + ADP + phosphate + 2 H(+). The protein operates within purine metabolism; IMP biosynthesis via de novo pathway; 5-amino-1-(5-phospho-D-ribosyl)imidazole-4-carboxamide from 5-amino-1-(5-phospho-D-ribosyl)imidazole-4-carboxylate: step 1/2. This chain is Phosphoribosylaminoimidazole-succinocarboxamide synthase, found in Flavobacterium psychrophilum (strain ATCC 49511 / DSM 21280 / CIP 103535 / JIP02/86).